A 711-amino-acid chain; its full sequence is Polyribonucleotide nucleotidyltransferase (711 aa).

Residues Asp489 and Asp495 each coordinate Mg(2+). Residues 556-615 (PRIHTIKISPDKIKDVIGKGGSVIRALTEETGTTIEIEDDGTVKIAATDGEKAKHAIRRI) form the KH domain. The 69-residue stretch at 625 to 693 (GRIYNGKVTR…RQGRVRLSIK (69 aa)) folds into the S1 motif domain.

Belongs to the polyribonucleotide nucleotidyltransferase family. In terms of assembly, component of the RNA degradosome, which is a multiprotein complex involved in RNA processing and mRNA degradation. The cofactor is Mg(2+).

The protein resides in the cytoplasm. The catalysed reaction is RNA(n+1) + phosphate = RNA(n) + a ribonucleoside 5'-diphosphate. Its function is as follows. Involved in mRNA degradation. Catalyzes the phosphorolysis of single-stranded polyribonucleotides processively in the 3'- to 5'-direction. The polypeptide is Polyribonucleotide nucleotidyltransferase (Cronobacter sakazakii (strain ATCC BAA-894) (Enterobacter sakazakii)).